A 257-amino-acid polypeptide reads, in one-letter code: Ribonuclease HII (257 aa).

Residues 72 to 257 form the RNase H type-2 domain; the sequence is TYIAGIDEVG…FAPIKDMIQK (186 aa). Aspartate 78, glutamate 79, and aspartate 170 together coordinate a divalent metal cation.

It belongs to the RNase HII family. Mn(2+) is required as a cofactor. Requires Mg(2+) as cofactor.

It localises to the cytoplasm. It carries out the reaction Endonucleolytic cleavage to 5'-phosphomonoester.. Its function is as follows. Endonuclease that specifically degrades the RNA of RNA-DNA hybrids. The sequence is that of Ribonuclease HII from Bacillus cereus (strain G9842).